A 164-amino-acid polypeptide reads, in one-letter code: Transcriptional repressor NrdR (164 aa).

Residues 3–34 (CPFCRHDDTQVVDSRVSEDGAAIRRRRRCPAC) fold into a zinc finger. The ATP-cone domain maps to 49-139 (PSVVKKDGSR…VYRRFEDVSE (91 aa)).

Belongs to the NrdR family. It depends on Zn(2+) as a cofactor.

Negatively regulates transcription of bacterial ribonucleotide reductase nrd genes and operons by binding to NrdR-boxes. This is Transcriptional repressor NrdR from Paraburkholderia phymatum (strain DSM 17167 / CIP 108236 / LMG 21445 / STM815) (Burkholderia phymatum).